The primary structure comprises 987 residues: Leucine--tRNA ligase (987 aa).

The 'HIGH' region motif lies at 69 to 80; sequence PYPSGKGLHVGH. Positions 760-764 match the 'KMSKS' region motif; that stretch reads KMGKS. Lys-763 contacts ATP.

It belongs to the class-I aminoacyl-tRNA synthetase family.

The protein resides in the cytoplasm. The enzyme catalyses tRNA(Leu) + L-leucine + ATP = L-leucyl-tRNA(Leu) + AMP + diphosphate. The sequence is that of Leucine--tRNA ligase from Bifidobacterium longum (strain NCC 2705).